The sequence spans 230 residues: MVKRAVVLISGGLDSTTCLAMAKAKGFEPVCLAVAYGQRHAVELEQARKVAAAMGVTDFRVVSIDLRQVGGSALTADIEVPKDRPSDEMSHGIPVTYVPARNALFLSLALGLAEVVGSTDIYIGVNAVDYSGYPDCRPEFIRSFESMANLATKAGVEGAHFTVHAPLSGLTKADIIREGVKLGVDYGLTHSCYDPDAQGRACGRCDSCVLRKKGFEEAGVPDPTRYTESA.

9-19 (ISGGLDSTTCL) is an ATP binding site. Residues cysteine 192, cysteine 202, cysteine 205, and cysteine 208 each coordinate Zn(2+).

It belongs to the QueC family. Zn(2+) is required as a cofactor.

The catalysed reaction is 7-carboxy-7-deazaguanine + NH4(+) + ATP = 7-cyano-7-deazaguanine + ADP + phosphate + H2O + H(+). It functions in the pathway purine metabolism; 7-cyano-7-deazaguanine biosynthesis. In terms of biological role, catalyzes the ATP-dependent conversion of 7-carboxy-7-deazaguanine (CDG) to 7-cyano-7-deazaguanine (preQ(0)). This is 7-cyano-7-deazaguanine synthase from Myxococcus xanthus (strain DK1622).